Reading from the N-terminus, the 214-residue chain is 3-isopropylmalate dehydratase small subunit (214 aa).

This sequence belongs to the LeuD family. LeuD type 1 subfamily. As to quaternary structure, heterodimer of LeuC and LeuD.

It carries out the reaction (2R,3S)-3-isopropylmalate = (2S)-2-isopropylmalate. Its pathway is amino-acid biosynthesis; L-leucine biosynthesis; L-leucine from 3-methyl-2-oxobutanoate: step 2/4. Catalyzes the isomerization between 2-isopropylmalate and 3-isopropylmalate, via the formation of 2-isopropylmaleate. In Desulforapulum autotrophicum (strain ATCC 43914 / DSM 3382 / VKM B-1955 / HRM2) (Desulfobacterium autotrophicum), this protein is 3-isopropylmalate dehydratase small subunit.